Here is a 338-residue protein sequence, read N- to C-terminus: Tagatose 1,6-diphosphate aldolase (338 aa).

This sequence belongs to the aldolase LacD family.

The enzyme catalyses D-tagatofuranose 1,6-bisphosphate = D-glyceraldehyde 3-phosphate + dihydroxyacetone phosphate. The protein operates within carbohydrate metabolism; D-tagatose 6-phosphate degradation; D-glyceraldehyde 3-phosphate and glycerone phosphate from D-tagatose 6-phosphate: step 2/2. The sequence is that of Tagatose 1,6-diphosphate aldolase from Listeria monocytogenes serotype 4b (strain CLIP80459).